The chain runs to 455 residues: MNELTGADFKSATADDNKKLFIETYGCQMNVADSEVIASVMQMAGYSVAETLEEADAVFMNTCSIRDNAEQKILNRLEFFHSLKKKKKALIVGVLGCMAERVKDDLITNHHVDLVVGPDAYLTLPELIAAVEAGEKAINVDLSTTETYRDVIPSRICGNHISGFVSIMRGCNNFCTYCIVPYTRGRERSRDVESILNEVADLVAKGYKEVTLLGQNVNSYRFEKPTGEVVTFPMLLRMVAEAAPGVRIRFTTSHPKDMSDETLEVIAQVPNVCKHIHLPVQSGSSRILKLMNRKYTREWYLDRVAAIKRIIPDCGLTTDIFSGFHSETEEDHQLSLSLMEECGYDAAFMFKYSERPGTYASKHLEDNVPEDVKVRRLNEIIALQNRLSAESNQRCIGKTYEVLVEGVSKRSRDQLFGRTEQNRVVVFDRGTHRIGDFVNVRVTEASSATLKGEEV.

In terms of domain architecture, MTTase N-terminal spans 18 to 133 (KKLFIETYGC…LPELIAAVEA (116 aa)). Residues C27, C63, C97, C171, C175, and C178 each contribute to the [4Fe-4S] cluster site. In terms of domain architecture, Radical SAM core spans 157 to 390 (CGNHISGFVS…IALQNRLSAE (234 aa)). The TRAM domain occupies 393–455 (QRCIGKTYEV…SSATLKGEEV (63 aa)).

Belongs to the methylthiotransferase family. MiaB subfamily. As to quaternary structure, monomer. It depends on [4Fe-4S] cluster as a cofactor.

Its subcellular location is the cytoplasm. The enzyme catalyses N(6)-dimethylallyladenosine(37) in tRNA + (sulfur carrier)-SH + AH2 + 2 S-adenosyl-L-methionine = 2-methylsulfanyl-N(6)-dimethylallyladenosine(37) in tRNA + (sulfur carrier)-H + 5'-deoxyadenosine + L-methionine + A + S-adenosyl-L-homocysteine + 2 H(+). Its function is as follows. Catalyzes the methylthiolation of N6-(dimethylallyl)adenosine (i(6)A), leading to the formation of 2-methylthio-N6-(dimethylallyl)adenosine (ms(2)i(6)A) at position 37 in tRNAs that read codons beginning with uridine. This is tRNA-2-methylthio-N(6)-dimethylallyladenosine synthase from Bacteroides thetaiotaomicron (strain ATCC 29148 / DSM 2079 / JCM 5827 / CCUG 10774 / NCTC 10582 / VPI-5482 / E50).